A 604-amino-acid chain; its full sequence is Baculoviral IAP repeat-containing protein 3 (604 aa).

BIR repeat units follow at residues 29 to 96 (ELYR…CRFV), 169 to 235 (ENAR…CPFI), and 255 to 322 (HAAR…CEYL). Zn(2+) is bound by residues Cys-292, Cys-295, His-312, and Cys-319. Residues 439-529 (KESNDLLLIR…VLYEHLFVQQ (91 aa)) enclose the CARD domain. Residues 557–592 (CKVCMDKEVSIVFIPCGHLVVCKDCAPSLRKCPICR) form an RING-type zinc finger.

This sequence belongs to the IAP family. Interacts with PRSS25; interaction inhibits apoptotic suppressor activity. The BIR motifs region interacts with TNF receptor associated factors 1 and 2 (TRAF1 and TRAF2) to form a heteromeric complex, which is then recruited to the tumor necrosis factor receptor 2 (TNFR2). Interaction with TRAF2 is required for ubiquitination of IKBKE, degradation of NFKBIA and activation of NF-kappa-B. Interacts with RIP1, RIP2, RIP3, RIP4 and USP19. Auto-ubiquitinated and degraded by the proteasome in apoptotic cells. As to expression, highly expressed in fetal lung, and kidney. In the adult, expression is mainly seen in lymphoid tissues, including spleen, thymus and peripheral blood lymphocytes.

It localises to the cytoplasm. It is found in the nucleus. The enzyme catalyses S-ubiquitinyl-[E2 ubiquitin-conjugating enzyme]-L-cysteine + [acceptor protein]-L-lysine = [E2 ubiquitin-conjugating enzyme]-L-cysteine + N(6)-ubiquitinyl-[acceptor protein]-L-lysine.. With respect to regulation, USP19 regulates the stability of BIRC3/c-IAP2 by preventing its ubiquitination. Multi-functional protein which regulates not only caspases and apoptosis, but also modulates inflammatory signaling and immunity, mitogenic kinase signaling and cell proliferation, as well as cell invasion and metastasis. Acts as an E3 ubiquitin-protein ligase regulating NF-kappa-B signaling and regulates both canonical and non-canonical NF-kappa-B signaling by acting in opposite directions: acts as a positive regulator of the canonical pathway and suppresses constitutive activation of non-canonical NF-kappa-B signaling. The target proteins for its E3 ubiquitin-protein ligase activity include: RIPK1, RIPK2, RIPK3, RIPK4, CASP3, CASP7, CASP8, IKBKE, TRAF1, and BCL10. Acts as an important regulator of innate immune signaling via regulation of Toll-like receptors (TLRs), Nodlike receptors (NLRs) and RIG-I like receptors (RLRs), collectively referred to as pattern recognition receptors (PRRs). Protects cells from spontaneous formation of the ripoptosome, a large multi-protein complex that has the capability to kill cancer cells in a caspase-dependent and caspase-independent manner. Suppresses ripoptosome formation by ubiquitinating RIPK1 and CASP8. This is Baculoviral IAP repeat-containing protein 3 (BIRC3) from Homo sapiens (Human).